A 720-amino-acid polypeptide reads, in one-letter code: Putative glutamine--fructose-6-phosphate aminotransferase [isomerizing] (720 aa).

The Nucleophile; for GATase activity role is filled by Cys-2. The region spanning Cys-2–Gly-321 is the Glutamine amidotransferase type-2 domain. The span at Ser-266 to Pro-280 shows a compositional bias: polar residues. The segment at Ser-266–Leu-285 is disordered. 2 consecutive SIS domains span residues Trp-393–Ser-532 and Cys-565–Pro-710.

The enzyme catalyses D-fructose 6-phosphate + L-glutamine = D-glucosamine 6-phosphate + L-glutamate. The protein operates within nucleotide-sugar biosynthesis; UDP-N-acetyl-alpha-D-glucosamine biosynthesis; alpha-D-glucosamine 6-phosphate from D-fructose 6-phosphate: step 1/1. In terms of biological role, involved in amino sugar synthesis (formation of chitin, supplies the amino sugars of asparagine-linked oligosaccharides of glycoproteins). In Saccharomyces cerevisiae (strain RM11-1a) (Baker's yeast), this protein is Putative glutamine--fructose-6-phosphate aminotransferase [isomerizing].